A 285-amino-acid polypeptide reads, in one-letter code: MVMRPLWSLLLWEALLPITVTGAQVLSKVGGSVLLVAARPPGFQVREAIWRSLWPSEELLATFFRGSLETLYHSRFLGRAQLHSNLSLELGPLESGDSGNFSVLMVDTRGQPWTQTLQLKVYDAVPRPVVQVFIAVERDAQPSKTCQVFLSCWAPNISEITYSWRRETTMDFGMEPHSLFTDGQVLSISLGPGDRDVAYSCIVSNPVSWDLATVTPWDSCHHEAAPGKASYKDVLLVVVPVSLLLMLVTLFSAWHWCPCSGKKKKDVHADRVGPETENPLVQDLP.

The N-terminal stretch at 1-22 is a signal peptide; it reads MVMRPLWSLLLWEALLPITVTG. The Extracellular segment spans residues 23-233; it reads AQVLSKVGGS…AAPGKASYKD (211 aa). A glycan (N-linked (GlcNAc...) asparagine) is linked at Asn85. The Ig-like C2-type domain occupies 128-215; that stretch reads PVVQVFIAVE…PVSWDLATVT (88 aa). Residues Cys152 and Cys201 are joined by a disulfide bond. The helical transmembrane segment at 234-254 threads the bilayer; it reads VLLVVVPVSLLLMLVTLFSAW. Over 255–285 the chain is Cytoplasmic; the sequence is HWCPCSGKKKKDVHADRVGPETENPLVQDLP. Residues 262-285 form a disordered region; the sequence is KKKKDVHADRVGPETENPLVQDLP.

Expressed in lymph node, spleen, thymus and bone marrow.

Its subcellular location is the membrane. Functionally, may play a role in B-lineage commitment and/or modulation of signaling through the B-cell receptor. The polypeptide is SLAM family member 8 (SLAMF8) (Homo sapiens (Human)).